Here is a 198-residue protein sequence, read N- to C-terminus: Proteasome subunit beta 1 (198 aa).

Positions 1–6 are cleaved as a propeptide — removed in mature form; by autocatalysis; sequence MSGPGA. Threonine 7 serves as the catalytic Nucleophile.

Belongs to the peptidase T1B family. The 20S proteasome core is composed of 14 alpha and 14 beta subunits that assemble into four stacked heptameric rings, resulting in a barrel-shaped structure. The two inner rings, each composed of seven catalytic beta subunits, are sandwiched by two outer rings, each composed of seven alpha subunits. The catalytic chamber with the active sites is on the inside of the barrel. Has a gated structure, the ends of the cylinder being occluded by the N-termini of the alpha-subunits. Is capped at one or both ends by the proteasome regulatory ATPase, PAN.

It localises to the cytoplasm. The catalysed reaction is Cleavage of peptide bonds with very broad specificity.. The formation of the proteasomal ATPase PAN-20S proteasome complex, via the docking of the C-termini of PAN into the intersubunit pockets in the alpha-rings, triggers opening of the gate for substrate entry. Interconversion between the open-gate and close-gate conformations leads to a dynamic regulation of the 20S proteasome proteolysis activity. In terms of biological role, component of the proteasome core, a large protease complex with broad specificity involved in protein degradation. In Ignicoccus hospitalis (strain KIN4/I / DSM 18386 / JCM 14125), this protein is Proteasome subunit beta 1.